The chain runs to 624 residues: PTS system mannitol-specific EIICBA component (624 aa).

The PTS EIIC type-2 domain maps to 13 to 336 (FGRFLSNMVM…SFVIASFFLK (324 aa)). 6 helical membrane passes run 25–46 (IGAF…WLPN), 51–71 (KLVG…SGGK), 135–156 (SSGI…PAVK), 166–186 (VDIL…EPAK), 274–293 (VIAG…AGLV), and 314–335 (VGVL…SFFL). The region spanning 372–463 (QKIFVACDAG…LVQDLSNTKV (92 aa)) is the PTS EIIB type-2 domain. The Phosphocysteine intermediate; for EIIB activity role is filled by Cys378. A Phosphocysteine; by EIIA modification is found at Cys378. Positions 482 to 624 (FVLTEKQVFL…VEKVLALLKA (143 aa)) constitute a PTS EIIA type-2 domain. His542 (tele-phosphohistidine intermediate; for EIIA activity) is an active-site residue. His542 carries the phosphohistidine; by HPr modification.

As to quaternary structure, homodimer. An intramolecular phosphotransfer takes places between His-542 and Cys-378.

Its subcellular location is the cell inner membrane. The catalysed reaction is D-mannitol(out) + N(pros)-phospho-L-histidyl-[protein] = D-mannitol 1-phosphate(in) + L-histidyl-[protein]. The phosphoenolpyruvate-dependent sugar phosphotransferase system (sugar PTS), a major carbohydrate active transport system, catalyzes the phosphorylation of incoming sugar substrates concomitantly with their translocation across the cell membrane. This system is involved in D-mannitol transport. The sequence is that of PTS system mannitol-specific EIICBA component (mtlA) from Pasteurella multocida (strain Pm70).